Consider the following 247-residue polypeptide: Osmotin-like protein NP24-I (247 aa).

A signal peptide spans 1–21; it reads MGYLTSSFVLFFLLCVTYTYA. 8 disulfide bridges follow: Cys-30-Cys-225, Cys-72-Cys-82, Cys-87-Cys-93, Cys-141-Cys-213, Cys-146-Cys-196, Cys-154-Cys-164, Cys-168-Cys-177, and Cys-178-Cys-183.

It belongs to the thaumatin family. In terms of tissue distribution, highest levels of both isoforms found in the outer pericarp, with smaller amounts in the inner pericarp.

The protein resides in the cytoplasm. It localises to the vacuole. It carries out the reaction Endohydrolysis of (1-&gt;3)- or (1-&gt;4)-linkages in beta-D-glucans when the glucose residue whose reducing group is involved in the linkage to be hydrolyzed is itself substituted at C-3.. Has antifungal activity against P.betae and F.dahliae. May be involved in disease resistance in tomatoes and/or have a possible role in fruit development and ripening. Binds to beta-glucans and exhibits beta-1,3-D-glucanase activity. The protein is Osmotin-like protein NP24-I of Solanum lycopersicum (Tomato).